The primary structure comprises 116 residues: Protein Wnt-5a (116 aa).

A lipid anchor (O-palmitoleoyl serine; by PORCN) is attached at serine 1. N-linked (GlcNAc...) asparagine glycans are attached at residues asparagine 69 and asparagine 83. An intrachain disulfide couples cysteine 82 to cysteine 97.

It belongs to the Wnt family. Post-translationally, palmitoleoylation is required for efficient binding to frizzled receptors. Depalmitoleoylation leads to Wnt signaling pathway inhibition.

The protein localises to the secreted. It is found in the extracellular space. Its subcellular location is the extracellular matrix. In terms of biological role, ligand for members of the frizzled family of seven transmembrane receptors. Can activate or inhibit canonical Wnt signaling, depending on receptor context. Required during embryogenesis for extension of the primary anterior-posterior axis. The protein is Protein Wnt-5a (WNT-5A) of Alopias vulpinus (Common thresher shark).